A 447-amino-acid chain; its full sequence is MAGVGGGNDFQWCFSQVKGAIDEDVAEADIISTVEFNCSGDLLATGDKGGRVVIFQREQENKSRPHSRGEYNVYSTFQSHEPEFDYLKSLEIEEKINKIRWLPQQNAAHFLLSTNDKTIKLWKISERDKRVEGYNLKDDDGRLRDPFRITSLRVPILKPMDLMVEASPRRIFANAHTYHINSISVNSDHETYLSADDLRINLWHLEITDRSFNIVDIKPANMEELTEVITAAEFHPHHCNVFVYSSSKGTIRLCDMRDSALCDRHSKFFEEPEDPSSRSFFSEIISSISDVKFSNSGRYMMTRDYLSVKVWDLNMESRPVETYQVHEYLRSKLCSLYENDCIFDKFECCWNGSDSAIMTGSYNNFFRMFDRNTRRDITLEASRESSKPRAILKPRKVCTGGKRKKDEINVDSLDFNKKILHTAWHPTDNIIAVAATNNLYIFQDKVN.

7 WD repeats span residues 26-65 (AEAD…KSRP), 91-132 (EIEE…KRVE), 175-213 (AHTY…RSFN), 224-264 (ELTE…LCDR), 283-321 (EIIS…RPVE), 338-379 (ENDC…DITL), and 414-447 (DFNK…DKVN).

The protein belongs to the phosphatase 2A regulatory subunit B family. In terms of assembly, PP2A consists of a common heterodimeric core enzyme, composed of a 36 kDa catalytic subunit (subunit C) and a 65 kDa constant regulatory subunit (PR65 or subunit A), that associates with a variety of regulatory subunits. Proteins that associate with the core dimer include three families of regulatory subunits B (the R2/B/PR55/B55, R3/B''/PR72/PR130/PR59 and R5/B'/B56 families), the 48 kDa variable regulatory subunit, viral proteins, and cell signaling molecules. Interacts with ensa (when phosphorylated at 'Ser-67') and arpp19 (when phosphorylated at 'Ser-67'), leading to inhibit PP2A activity.

The protein resides in the cytoplasm. In terms of biological role, substrate-recognition subunit of protein phosphatase 2A (PP2A) that plays a key role in cell cycle by controlling mitosis entry and exit. The activity of PP2A complexes containing ppp2r2d (PR55-delta) fluctuate during the cell cycle: the activity is high in interphase and low in mitosis. During mitosis, activity of PP2A is inhibited via interaction with phosphorylated ensa and arpp19 inhibitors. PP2A complexes containing ppp2r2d (PR55-delta) also regulate the activity of TGF-beta/Activin/Nodal signaling by restricting receptor activity. Within the PP2A complexes, the B regulatory subunits modulate substrate selectivity and catalytic activity, and may also direct the localization of the catalytic enzyme to a particular subcellular compartment. In Xenopus tropicalis (Western clawed frog), this protein is Serine/threonine-protein phosphatase 2A 55 kDa regulatory subunit B delta isoform (ppp2r2d).